Here is a 191-residue protein sequence, read N- to C-terminus: MSRIGKRPIPIPDKVAVTIDGSTVKVKGPKGELSQVLPPEVVVVQENSSLLVNRRDDSRPARQRHGLSRTLVANMVKGVTEGFRKNMQIVGVGYRLQVTGNKLAITAGYSHPVEIDLPKGISVEVDQKAVPIANSKSQQGFNFGVIGIDKQAVGDVAALIRAVRPLEPYKGKGIRYATETLRLKAGKTGKK.

The protein belongs to the universal ribosomal protein uL6 family. As to quaternary structure, part of the 50S ribosomal subunit.

In terms of biological role, this protein binds to the 23S rRNA, and is important in its secondary structure. It is located near the subunit interface in the base of the L7/L12 stalk, and near the tRNA binding site of the peptidyltransferase center. This Cyanothece sp. (strain PCC 7425 / ATCC 29141) protein is Large ribosomal subunit protein uL6.